Consider the following 313-residue polypeptide: DNA-directed RNA polymerase subunit alpha (313 aa).

The interval 1–229 is alpha N-terminal domain (alpha-NTD); that stretch reads MNSSNLLMEC…NLFKSIGEQK (229 aa). The interval 243–313 is alpha C-terminal domain (alpha-CTD); it reads IKPIDPYTHI…LKNKLGIVLK (71 aa).

The protein belongs to the RNA polymerase alpha chain family. As to quaternary structure, in plastids the minimal PEP RNA polymerase catalytic core is composed of four subunits: alpha, beta, beta', and beta''. When a (nuclear-encoded) sigma factor is associated with the core the holoenzyme is formed, which can initiate transcription.

The protein localises to the plastid. It localises to the chloroplast. It carries out the reaction RNA(n) + a ribonucleoside 5'-triphosphate = RNA(n+1) + diphosphate. DNA-dependent RNA polymerase catalyzes the transcription of DNA into RNA using the four ribonucleoside triphosphates as substrates. This Thalassiosira pseudonana (Marine diatom) protein is DNA-directed RNA polymerase subunit alpha.